The primary structure comprises 703 residues: 1,4-alpha-glucan-branching enzyme (703 aa).

2 residues coordinate (1,4-alpha-D-glucosyl)n: tryptophan 93 and lysine 130. The Nucleophile role is filled by aspartate 355. Residue glutamate 415 is the Proton donor of the active site.

This sequence belongs to the glycosyl hydrolase 13 family. GlgB subfamily.

It is found in the cytoplasm. It catalyses the reaction Transfers a segment of a (1-&gt;4)-alpha-D-glucan chain to a primary hydroxy group in a similar glucan chain.. The protein operates within glycan biosynthesis; glycogen biosynthesis. Its function is as follows. Glycogen-branching enzyme participates in the glycogen biosynthetic process along with glycogenin and glycogen synthase. Generates alpha-1,6-glucosidic branches from alpha-1,4-linked glucose chains, to increase solubility of the glycogen polymer. The polypeptide is 1,4-alpha-glucan-branching enzyme (GLC3) (Eremothecium gossypii (strain ATCC 10895 / CBS 109.51 / FGSC 9923 / NRRL Y-1056) (Yeast)).